The following is a 118-amino-acid chain: Secreted effector CSEP0064 (118 aa).

Positions 1–21 (MRPFQLLSALAIFINLEAVEA) are cleaved as a signal peptide. Cys-27 and Cys-113 form a disulfide bridge.

As to quaternary structure, interacts in planta with the pathogenesis-related protein PR10.

Its subcellular location is the secreted. The protein resides in the host cell. Secreted effector that increases susceptibility to infection in both monocotyledonous and dicotyledonous plants. Non-catalytic homolog of fungal RNases that binds host RNA and inhibits the degradation of host ribosomal RNA induced by ribosome-inactivating proteins (RIPs), preventing host cell death, an inviable interaction and demise of the fungus. The sequence is that of Secreted effector CSEP0064 from Blumeria graminis f. sp. hordei (strain DH14) (Barley powdery mildew).